Reading from the N-terminus, the 222-residue chain is uncharacterized protein (222 aa).

It belongs to the ycf73 family.

The protein resides in the plastid. It is found in the chloroplast. This is an uncharacterized protein from Oryza nivara (Indian wild rice).